Here is a 396-residue protein sequence, read N- to C-terminus: Purine ribonucleoside efflux pump NepI (396 aa).

Topologically, residues M1–A21 are cytoplasmic. A helical transmembrane segment spans residues V22–L42. Topologically, residues L43 to E54 are periplasmic. A helical membrane pass occupies residues G55–I75. At T76–R85 the chain is on the cytoplasmic side. A helical membrane pass occupies residues Y86–N106. Position 107 (S107) is a topological domain, periplasmic. Residues F108 to M128 traverse the membrane as a helical segment. Topologically, residues S129–S147 are cytoplasmic. The helical transmembrane segment at V148 to G168 threads the bilayer. The Periplasmic portion of the chain corresponds to E169 to N175. A helical transmembrane segment spans residues V176–P196. At S197 to R215 the chain is on the cytoplasmic side. Residues P216–F236 traverse the membrane as a helical segment. At T237–T255 the chain is on the periplasmic side. The helical transmembrane segment at L256–L276 threads the bilayer. Over K277–K281 the chain is Cytoplasmic. A helical membrane pass occupies residues L282–G302. At S303–K305 the chain is on the periplasmic side. The helical transmembrane segment at I306 to W326 threads the bilayer. Residues S327–S343 lie on the Cytoplasmic side of the membrane. Residues I344–L364 traverse the membrane as a helical segment. The Periplasmic segment spans residues D365 to N366. A helical transmembrane segment spans residues I367–V387. Residues T388–S396 are Cytoplasmic-facing.

This sequence belongs to the major facilitator superfamily. DHA1 family. NepI (TC 2.A.1.2.26) subfamily.

It localises to the cell inner membrane. The catalysed reaction is inosine(in) + H(+)(out) = inosine(out) + H(+)(in). It catalyses the reaction guanosine(in) + H(+)(out) = guanosine(out) + H(+)(in). In terms of biological role, involved in the efflux of purine ribonucleosides, such as inosine and guanosine. This chain is Purine ribonucleoside efflux pump NepI, found in Escherichia coli O6:H1 (strain CFT073 / ATCC 700928 / UPEC).